Here is a 242-residue protein sequence, read N- to C-terminus: UPF0246 protein SPH_1662 (242 aa).

Belongs to the UPF0246 family.

The sequence is that of UPF0246 protein SPH_1662 from Streptococcus pneumoniae (strain Hungary19A-6).